The following is a 589-amino-acid chain: uncharacterized protein (589 aa).

4 disordered regions span residues 328 to 365 (LSST…EDGP), 379 to 459 (SLLG…DPSN), 525 to 555 (RSTS…GAVK), and 569 to 589 (VRGT…SRDM). A compositionally biased stretch (polar residues) spans 398–425 (VSLSSASTSARPTQRRSSLTPCSQTPQE). The segment covering 426–445 (THQHAREALTTRMESQREAN) has biased composition (basic and acidic residues). Acidic residues predominate over residues 536-545 (QGDDDDEEDG).

This is an uncharacterized protein from Mycosarcoma maydis (Corn smut fungus).